Here is a 97-residue protein sequence, read N- to C-terminus: Large ribosomal subunit protein bL28 (97 aa).

It belongs to the bacterial ribosomal protein bL28 family.

The protein is Large ribosomal subunit protein bL28 of Rickettsia felis (strain ATCC VR-1525 / URRWXCal2) (Rickettsia azadi).